The sequence spans 143 residues: Large-conductance mechanosensitive channel (143 aa).

2 helical membrane passes run 10 to 30 and 89 to 109; these read FAVK…GAFS and GSFI…FLMV.

The protein belongs to the MscL family. Homopentamer.

It localises to the cell inner membrane. Channel that opens in response to stretch forces in the membrane lipid bilayer. May participate in the regulation of osmotic pressure changes within the cell. In Burkholderia pseudomallei (strain 668), this protein is Large-conductance mechanosensitive channel.